The chain runs to 217 residues: Peptide methionine sulfoxide reductase MsrA (217 aa).

Residue C56 is part of the active site.

The protein belongs to the MsrA Met sulfoxide reductase family.

It carries out the reaction L-methionyl-[protein] + [thioredoxin]-disulfide + H2O = L-methionyl-(S)-S-oxide-[protein] + [thioredoxin]-dithiol. The enzyme catalyses [thioredoxin]-disulfide + L-methionine + H2O = L-methionine (S)-S-oxide + [thioredoxin]-dithiol. In terms of biological role, has an important function as a repair enzyme for proteins that have been inactivated by oxidation. Catalyzes the reversible oxidation-reduction of methionine sulfoxide in proteins to methionine. The polypeptide is Peptide methionine sulfoxide reductase MsrA (Rippkaea orientalis (strain PCC 8801 / RF-1) (Cyanothece sp. (strain PCC 8801))).